The following is a 388-amino-acid chain: Riboflavin biosynthesis protein RibBA (388 aa).

A DHBP synthase region spans residues 1 to 186 (MEELREAFEE…MDDVWREFVK (186 aa)). D-ribulose 5-phosphate-binding positions include 21-22 (RE), Asp26, 125-129 (RKGHT), and Glu149. Residue Glu22 participates in Mg(2+) binding. His128 provides a ligand contact to Mg(2+). Positions 187-388 (RKLLMKKKAE…LEEIFREVNS (202 aa)) are GTP cyclohydrolase II. 235–239 (RIHSE) is a binding site for GTP. Zn(2+) contacts are provided by Cys240, Cys251, and Cys253. GTP-binding positions include Gln256, 277–279 (EGR), and Thr299. Asp311 (proton acceptor; for GTP cyclohydrolase activity) is an active-site residue. The active-site Nucleophile; for GTP cyclohydrolase activity is the Arg313. Thr334 and Lys339 together coordinate GTP.

The protein in the N-terminal section; belongs to the DHBP synthase family. It in the C-terminal section; belongs to the GTP cyclohydrolase II family. Mg(2+) serves as cofactor. The cofactor is Mn(2+). Requires Zn(2+) as cofactor.

It catalyses the reaction D-ribulose 5-phosphate = (2S)-2-hydroxy-3-oxobutyl phosphate + formate + H(+). It carries out the reaction GTP + 4 H2O = 2,5-diamino-6-hydroxy-4-(5-phosphoribosylamino)-pyrimidine + formate + 2 phosphate + 3 H(+). It functions in the pathway cofactor biosynthesis; riboflavin biosynthesis; 2-hydroxy-3-oxobutyl phosphate from D-ribulose 5-phosphate: step 1/1. Its pathway is cofactor biosynthesis; riboflavin biosynthesis; 5-amino-6-(D-ribitylamino)uracil from GTP: step 1/4. Functionally, catalyzes the conversion of D-ribulose 5-phosphate to formate and 3,4-dihydroxy-2-butanone 4-phosphate. In terms of biological role, catalyzes the conversion of GTP to 2,5-diamino-6-ribosylamino-4(3H)-pyrimidinone 5'-phosphate (DARP), formate and pyrophosphate. The protein is Riboflavin biosynthesis protein RibBA of Thermotoga maritima (strain ATCC 43589 / DSM 3109 / JCM 10099 / NBRC 100826 / MSB8).